The chain runs to 198 residues: Na(+)-translocating NADH-quinone reductase subunit E (198 aa).

The next 6 helical transmembrane spans lie at 11 to 31 (AVFIENMALAFFLGMCTFLAV), 39 to 59 (FGLGIAVTVVLGLSVPLNNLV), 77 to 97 (FLNFITFIGVIAALVQILEMI), 109 to 129 (LGIFLPLITVNCAIFGGVSFM), 140 to 160 (IVYGFGSGIGWMLAIVLLASI), and 176 to 196 (LGVTFVTTGLMALGFMSFSGV).

The protein belongs to the NqrDE/RnfAE family. As to quaternary structure, composed of six subunits; NqrA, NqrB, NqrC, NqrD, NqrE and NqrF.

It localises to the cell inner membrane. It catalyses the reaction a ubiquinone + n Na(+)(in) + NADH + H(+) = a ubiquinol + n Na(+)(out) + NAD(+). NQR complex catalyzes the reduction of ubiquinone-1 to ubiquinol by two successive reactions, coupled with the transport of Na(+) ions from the cytoplasm to the periplasm. NqrA to NqrE are probably involved in the second step, the conversion of ubisemiquinone to ubiquinol. This is Na(+)-translocating NADH-quinone reductase subunit E from Proteus mirabilis (strain HI4320).